The primary structure comprises 399 residues: MEPAGPCGFCPTGEAQPARYTCPRCNVPYCSLRCYRAHGSCAEEFYRDQVLGELRGRSASPSRLATALRRLRQQRETEDEPGDAGLRPGPAPGGLSGLWERLAPAEKVAFERLLSRGEAGRLLPPWRPWWWGRGAGPRLLEELGDAPSGDAEELEPSPARMPPEPVRDEPAAVEQVLGDLPGACPPAVPTRIPALASLSRGRTSPLVRFQLPNVLFAYAHTLALYHGGDEALLSDFCATLLGVSGALGAQQVFASAEEALQAAAHVLEAGEHPPGPLGTRGAMREAARILLGEGPANQKSYTLAALGDLAQTLGRARKQAVAPEERDRLYRARKKCQFLLSWTNENEDALTPLALDCATAHRAHTVAAEDVAALTGELEQLWGGPLPPARRTLIEELPG.

Methionine 1 bears the N-acetylmethionine mark. Residues cysteine 7, cysteine 10, cysteine 22, cysteine 25, cysteine 30, cysteine 34, histidine 38, and cysteine 41 each coordinate Zn(2+). The HIT-type zinc finger occupies 7–41 (CGFCPTGEAQPARYTCPRCNVPYCSLRCYRAHGSC). Disordered regions lie at residues 71 to 97 (LRQQ…GLSG) and 141 to 166 (EELG…PEPV).

Interacts (via HIT-type zinc finger) with RUVBL2 in the presence of ATP or ADP; shows a stronger interaction in the presence of ADP.

In terms of biological role, may act as a bridging factor mediating the interaction between the R2TP/Prefoldin-like (R2TP/PFDL) complex and U5 small nuclear ribonucleoprotein (U5 snRNP). Required for the interaction of R2TP complex subunit RPAP3 and prefoldin-like subunit URI1 with U5 snRNP proteins EFTUD2 and PRPF8. May play a role in regulating the composition of the U5 snRNP complex. This is Zinc finger HIT domain-containing protein 2 (ZNHIT2) from Bos taurus (Bovine).